The chain runs to 663 residues: Probable potassium transport system protein Kup (663 aa).

A disordered region spans residues 1–23; that stretch reads MSDNPSSRAGPEVVPTPPPSPAA. Helical transmembrane passes span 81–101, 137–157, 173–193, 201–221, 224–244, 248–268, 283–303, 315–335, 373–393, 399–419, 433–453, and 455–475; these read PANV…VVTF, LLII…VITP, PALE…LFFI, VGAV…ILGV, ILFD…AFFA, WHGF…EALY, WLLV…AILL, LLVP…AAIV, IYVP…VLGF, LAAA…LLFH, AWPL…ANIV, and VEEG…LLST.

This sequence belongs to the HAK/KUP transporter (TC 2.A.72) family.

The protein resides in the cell inner membrane. It catalyses the reaction K(+)(in) + H(+)(in) = K(+)(out) + H(+)(out). Functionally, transport of potassium into the cell. Likely operates as a K(+):H(+) symporter. This is Probable potassium transport system protein Kup from Anaeromyxobacter sp. (strain Fw109-5).